The chain runs to 90 residues: Acylphosphatase (90 aa).

Positions 3 to 90 (NYKIIVFGTV…KTYNDFSVTY (88 aa)) constitute an Acylphosphatase-like domain. Active-site residues include Arg18 and Asn36.

It belongs to the acylphosphatase family.

The enzyme catalyses an acyl phosphate + H2O = a carboxylate + phosphate + H(+). The polypeptide is Acylphosphatase (acyP) (Ligilactobacillus salivarius (strain UCC118) (Lactobacillus salivarius)).